Consider the following 443-residue polypeptide: Mitochondrial enolase superfamily member 1 (443 aa).

Residues 24–26 (GAD) and Tyr34 contribute to the substrate site. Phosphoserine is present on Ser148. Lys220 lines the substrate pocket. Catalysis depends on Lys222, which acts as the Proton donor/acceptor. Asp250 is a Mg(2+) binding site. Substrate-binding positions include Asn252, Glu276, Glu305, 355-357 (HAG), and Glu386. Glu276 and Glu305 together coordinate Mg(2+). Residue His355 is part of the active site.

It belongs to the mandelate racemase/muconate lactonizing enzyme family. ENOSF1 subfamily. The cofactor is Mg(2+). Could be sumoylated.

It localises to the mitochondrion. It carries out the reaction L-fuconate = 2-dehydro-3-deoxy-L-fuconate + H2O. Its function is as follows. Plays a role in the catabolism of L-fucose, a sugar that is part of the carbohydrates that are attached to cellular glycoproteins. Catalyzes the dehydration of L-fuconate to 2-keto-3-deoxy-L-fuconate by the abstraction of the 2-proton to generate an enediolate intermediate that is stabilized by the magnesium ion. This Homo sapiens (Human) protein is Mitochondrial enolase superfamily member 1 (ENOSF1).